The chain runs to 295 residues: Sulfotransferase 1A2 (295 aa).

48–53 (KSGTTW) contacts 3'-phosphoadenylyl sulfate. 106-108 (KTH) lines the substrate pocket. The Proton acceptor role is filled by H108. Residues R130, S138, Y193, 227-232 (TSFKEM), and 255-259 (FMRKG) contribute to the 3'-phosphoadenylyl sulfate site.

Belongs to the sulfotransferase 1 family. As to quaternary structure, homodimer.

The protein localises to the cytoplasm. It carries out the reaction a phenol + 3'-phosphoadenylyl sulfate = an aryl sulfate + adenosine 3',5'-bisphosphate + H(+). In terms of biological role, sulfotransferase that utilizes 3'-phospho-5'-adenylyl sulfate (PAPS) as sulfonate donor to catalyze the sulfate conjugation of catecholamines, phenolic drugs and neurotransmitters. Is also responsible for the sulfonation and activation of minoxidil. Mediates the metabolic activation of carcinogenic N-hydroxyarylamines to DNA binding products and could so participate as modulating factor of cancer risk. This chain is Sulfotransferase 1A2 (SULT1A2), found in Homo sapiens (Human).